A 683-amino-acid chain; its full sequence is Probable potassium transport system protein Kup 1 (683 aa).

12 helical membrane passes run 13-33 (GLLI…LYVM), 55-75 (ISLV…FIAL), 98-118 (WLVL…TLTP), 139-159 (VPVS…LLLF), 168-188 (IIGK…GVIG), 218-238 (AGIF…ALYS), 251-271 (SWPY…VWIL), 296-316 (LAAI…LITG), 345-365 (IYIP…VLFF), 376-396 (GLSI…WLAM), 401-421 (TIWN…FMLA), and 426-446 (FMHG…IMYV).

The protein belongs to the HAK/KUP transporter (TC 2.A.72) family.

The protein resides in the cell membrane. It carries out the reaction K(+)(in) + H(+)(in) = K(+)(out) + H(+)(out). Transport of potassium into the cell. Likely operates as a K(+):H(+) symporter. The protein is Probable potassium transport system protein Kup 1 of Lactobacillus johnsonii (strain CNCM I-12250 / La1 / NCC 533).